The primary structure comprises 100 residues: Protein SAMBA (100 aa).

The interval 1–40 (MNGASPAHSLVSTTAVAGGGGSSGAAAGLDDFHFPPDIPS) is disordered.

In terms of assembly, interacts with CDC27B and CYCA2-3. In terms of tissue distribution, expressed in embryos, germinating seeds, hypocotyls and pollen grains.

Its function is as follows. Plays an important role in organ size control. Acts as negative regulator of the anaphase-promoting complex/cyclosome (APC/C). Regulates cell proliferation during early development by targeting CYCA2-3 for APC/C-mediated degradation. Required for mitosis I during pollen microspore development. This Arabidopsis thaliana (Mouse-ear cress) protein is Protein SAMBA.